Here is a 765-residue protein sequence, read N- to C-terminus: MATLLIDNYDSFTYNVYQYLCSQGADVVVYRNDKITVDEIVKLNPVNIVISPGPGHPSHDAGVSRDVISYFAGKLPILGICMGEQCIFEVFGGTVSYAGDILHGKTSTIKHDNRGLFKNVPQDNQVTRYHSLAGMPSTLPEVLEVTATTDDGVIMGVRHKKYTVEGVQFHPESILCEHGHTMISNFLSLRGGNWDENPAAGVLAQKVPAAATEKAAQEASPAISTPPTCSTILSRIYAQRVKDVQAAKEVPGQSQADLQKLLNLHIAPPLRDVVNRLKESSPALMAEVKRASPSKGNIDITVNAAEQALQYALAGASVISVLTEPKWFRGSLNDLRQVREACPLLPNRPCILRKTFLLDTYQILEARLYGADTVLLIVAMMSDEDLRELYQYSVSLGMEPLVEVNNAEEMARANAVGAKLIGVNNRGLHSFDVDMETTSRLAEMVPEGTILCALSGISTRADVETYVSQGVHGLLVGEALMRAWNLKEFVAELLGYKKKDPVPHTPVSRQVQVKICGISSVEAAVEAATAGADLVGLIFAEKSKRQVTVAKAREIVDALHKLPTRSSQLPVKSQKSIDWFDVQTEMVEQRVPWRPLVVGVFVNQSIEYMSQVAVEAGLDLIQLHGTESAEIARFLPVPVIKAFHMDASSFHAGQIPYVTQPGNNQLLLLDAKVPSLPMDRQGGLGQKFDWTIAQDIVNVKRPGCSKEQTFPVILAGGLDPSNISEAIQQVRPWAVDVSSGVETDGKKDLKKIRAFVEKAKSINLQ.

A Glutamine amidotransferase type-1 domain is found at 2-196 (ATLLIDNYDS…LSLRGGNWDE (195 aa)). 53–55 (GPG) contributes to the L-glutamine binding site. C81 functions as the Nucleophile; for GATase activity in the catalytic mechanism. L-glutamine-binding positions include Q85 and 131 to 132 (SL). Active-site for GATase activity residues include H170 and E172. Residues 231-494 (TILSRIYAQR…NLKEFVAELL (264 aa)) form an indole-3-glycerol phosphate synthase region. Positions 512 to 765 (QVKICGISSV…VEKAKSINLQ (254 aa)) are N-(5'-phosphoribosyl)anthranilate isomerase.

The enzyme catalyses N-(5-phospho-beta-D-ribosyl)anthranilate = 1-(2-carboxyphenylamino)-1-deoxy-D-ribulose 5-phosphate. It catalyses the reaction 1-(2-carboxyphenylamino)-1-deoxy-D-ribulose 5-phosphate + H(+) = (1S,2R)-1-C-(indol-3-yl)glycerol 3-phosphate + CO2 + H2O. It carries out the reaction chorismate + L-glutamine = anthranilate + pyruvate + L-glutamate + H(+). It participates in amino-acid biosynthesis; L-tryptophan biosynthesis; L-tryptophan from chorismate: step 1/5. The protein operates within amino-acid biosynthesis; L-tryptophan biosynthesis; L-tryptophan from chorismate: step 3/5. It functions in the pathway amino-acid biosynthesis; L-tryptophan biosynthesis; L-tryptophan from chorismate: step 4/5. In terms of biological role, trifunctional enzyme bearing the Gln amidotransferase (GATase) domain of anthranilate synthase, indole-glycerolphosphate synthase, and phosphoribosylanthranilate isomerase activities. This Phycomyces blakesleeanus protein is Multifunctional tryptophan biosynthesis protein (trp1).